We begin with the raw amino-acid sequence, 379 residues long: Chaperone protein DnaJ (379 aa).

Residues 5 to 70 (DYYETLEVSQ…QKRAAYDQYG (66 aa)) form the J domain. A CR-type zinc finger spans residues 135 to 213 (GKSLEIKVPT…CRGQGRVEKT (79 aa)). Cysteine 148, cysteine 151, cysteine 165, cysteine 168, cysteine 187, cysteine 190, cysteine 201, and cysteine 204 together coordinate Zn(2+). CXXCXGXG motif repeat units lie at residues 148-155 (CEPCDGSG), 165-172 (CSTCHGHG), 187-194 (CPTCSGKG), and 201-208 (CTSCRGQG).

This sequence belongs to the DnaJ family. Homodimer. The cofactor is Zn(2+).

It is found in the cytoplasm. Participates actively in the response to hyperosmotic and heat shock by preventing the aggregation of stress-denatured proteins and by disaggregating proteins, also in an autonomous, DnaK-independent fashion. Unfolded proteins bind initially to DnaJ; upon interaction with the DnaJ-bound protein, DnaK hydrolyzes its bound ATP, resulting in the formation of a stable complex. GrpE releases ADP from DnaK; ATP binding to DnaK triggers the release of the substrate protein, thus completing the reaction cycle. Several rounds of ATP-dependent interactions between DnaJ, DnaK and GrpE are required for fully efficient folding. Also involved, together with DnaK and GrpE, in the DNA replication of plasmids through activation of initiation proteins. This chain is Chaperone protein DnaJ, found in Colwellia maris.